We begin with the raw amino-acid sequence, 466 residues long: 3-isopropylmalate dehydratase large subunit (466 aa).

The [4Fe-4S] cluster site is built by Cys-347, Cys-407, and Cys-410.

The protein belongs to the aconitase/IPM isomerase family. LeuC type 1 subfamily. In terms of assembly, heterodimer of LeuC and LeuD. Requires [4Fe-4S] cluster as cofactor.

The catalysed reaction is (2R,3S)-3-isopropylmalate = (2S)-2-isopropylmalate. Its pathway is amino-acid biosynthesis; L-leucine biosynthesis; L-leucine from 3-methyl-2-oxobutanoate: step 2/4. Its function is as follows. Catalyzes the isomerization between 2-isopropylmalate and 3-isopropylmalate, via the formation of 2-isopropylmaleate. The chain is 3-isopropylmalate dehydratase large subunit from Shewanella piezotolerans (strain WP3 / JCM 13877).